The following is a 310-amino-acid chain: HPr kinase/phosphorylase (310 aa).

Active-site residues include His-138 and Lys-159. 153–160 (GDSGIGKS) contacts ATP. Ser-160 serves as a coordination point for Mg(2+). Asp-177 (proton acceptor; for phosphorylation activity. Proton donor; for dephosphorylation activity) is an active-site residue. The tract at residues 201–210 (LEIRGVGIID) is important for the catalytic mechanism of both phosphorylation and dephosphorylation. Mg(2+) is bound at residue Glu-202. Residue Arg-243 is part of the active site. An important for the catalytic mechanism of dephosphorylation region spans residues 264 to 269 (PVQTGR).

This sequence belongs to the HPrK/P family. In terms of assembly, homohexamer. Requires Mg(2+) as cofactor. Mn(2+) serves as cofactor.

The catalysed reaction is [HPr protein]-L-serine + ATP = [HPr protein]-O-phospho-L-serine + ADP + H(+). It catalyses the reaction [HPr protein]-O-phospho-L-serine + phosphate + H(+) = [HPr protein]-L-serine + diphosphate. Kinase activity is inhibited by inorganic phosphate (Pi). In contrast to many other bacteria, neither kinase activity nor phosphorylase activity is affected by fructose 1,6-bisphosphate (FBP). Functionally, catalyzes the ATP- as well as probably the pyrophosphate-dependent phosphorylation of 'Ser-46' in HPr, a phosphocarrier protein of the phosphoenolpyruvate-dependent sugar phosphotransferase system (PTS). HprK/P also catalyzes the pyrophosphate-producing, inorganic phosphate-dependent dephosphorylation (phosphorolysis) of seryl-phosphorylated HPr (P-Ser-HPr). The two antagonistic activities of HprK/P are regulated by several intracellular metabolites, which change their concentration in response to the absence or presence of rapidly metabolisable carbon sources (glucose, fructose, etc.) in the growth medium. Therefore, by controlling the phosphorylation state of HPr, the HPrK/P is a sensor enzyme that plays a major role in the regulation of carbon metabolism and sugar transport: it probably mediates carbon catabolite repression (CCR), and regulates PTS-catalyzed carbohydrate uptake and inducer exclusion. The polypeptide is HPr kinase/phosphorylase (hprK) (Streptococcus equinus (Streptococcus bovis)).